The sequence spans 874 residues: Leucine--tRNA ligase (874 aa).

The 'HIGH' region signature appears at 43-53 (PYPSGRIHIGH). The interval 614–634 (LDDGSPVTVGPPEKMSKSKKN) is disordered. Residues 627–631 (KMSKS) carry the 'KMSKS' region motif. Residue Lys630 participates in ATP binding.

The protein belongs to the class-I aminoacyl-tRNA synthetase family.

It is found in the cytoplasm. The enzyme catalyses tRNA(Leu) + L-leucine + ATP = L-leucyl-tRNA(Leu) + AMP + diphosphate. The polypeptide is Leucine--tRNA ligase (Azorhizobium caulinodans (strain ATCC 43989 / DSM 5975 / JCM 20966 / LMG 6465 / NBRC 14845 / NCIMB 13405 / ORS 571)).